Here is a 121-residue protein sequence, read N- to C-terminus: MAKKKKINVSSGIIHVSCSPNNTIVSASDPGGNVLCWASSGTMGFKGSRKKTPYSAGIAADKVAKTVKEMGMATVKLFVKGTGRGKDTAIRSFANAGLSITEINEKTPIPHNGCKPPKRPR.

It belongs to the universal ribosomal protein uS11 family. Part of the 30S ribosomal subunit. Interacts with proteins S7 and S18. Binds to IF-3.

Its function is as follows. Located on the platform of the 30S subunit, it bridges several disparate RNA helices of the 16S rRNA. Forms part of the Shine-Dalgarno cleft in the 70S ribosome. This Mycoplasma pneumoniae (strain ATCC 29342 / M129 / Subtype 1) (Mycoplasmoides pneumoniae) protein is Small ribosomal subunit protein uS11.